Here is a 237-residue protein sequence, read N- to C-terminus: F-box only protein 50 (237 aa).

One can recognise an FBA domain in the interval 31–231 (VFETKPFERN…VTDSSVIVKA (201 aa)). Residues 40-82 (NLLQNPSPYGVNHTVPPPEPHRSGIPPPSDRPPQLEPEGNFSG) form a disordered region. Over residues 64 to 74 (IPPPSDRPPQL) the composition is skewed to pro residues.

Expressed in nonspecific cytotoxic cells (NCC).

Its subcellular location is the cytoplasm. Its function is as follows. May promote cell proliferation. The chain is F-box only protein 50 (nccrp1) from Danio rerio (Zebrafish).